The primary structure comprises 31 residues: Cyclotide mden-J (31 aa).

Positions 1 to 31 form a cross-link, cyclopeptide (Gly-Asn); the sequence is GSIPCGESCVYIPCISSIVGCACKSKVCYKN. 3 disulfides stabilise this stretch: cysteine 5/cysteine 21, cysteine 9/cysteine 23, and cysteine 14/cysteine 28.

Belongs to the cyclotide family. Bracelet subfamily. In terms of processing, this is a cyclic peptide.

Its function is as follows. Probably participates in a plant defense mechanism. The polypeptide is Cyclotide mden-J (Melicytus dentatus (Tree violet)).